The chain runs to 317 residues: SVP1-like protein 2 (317 aa).

WD repeat units follow at residues 119–159 (AHST…KMAE) and 164–203 (VDHA…NAPY).

It belongs to the WD repeat PROPPIN family.

It is found in the vacuole membrane. The protein localises to the cytoplasmic vesicle membrane. Involved in mitochondrial or peroxisomal functions and amino acid signaling pathways. In Emericella nidulans (strain FGSC A4 / ATCC 38163 / CBS 112.46 / NRRL 194 / M139) (Aspergillus nidulans), this protein is SVP1-like protein 2 (hsv2).